The chain runs to 175 residues: NADH-quinone oxidoreductase subunit I 2 (175 aa).

4Fe-4S ferredoxin-type domains follow at residues 50 to 82 and 98 to 127; these read HVLQ…IEAA and KVYN…HGHG. 8 residues coordinate [4Fe-4S] cluster: C62, C65, C68, C72, C107, C110, C113, and C117.

Belongs to the complex I 23 kDa subunit family. As to quaternary structure, NDH-1 is composed of 14 different subunits. Subunits NuoA, H, J, K, L, M, N constitute the membrane sector of the complex. [4Fe-4S] cluster is required as a cofactor.

The protein resides in the cell inner membrane. It catalyses the reaction a quinone + NADH + 5 H(+)(in) = a quinol + NAD(+) + 4 H(+)(out). In terms of biological role, NDH-1 shuttles electrons from NADH, via FMN and iron-sulfur (Fe-S) centers, to quinones in the respiratory chain. The immediate electron acceptor for the enzyme in this species is believed to be ubiquinone. Couples the redox reaction to proton translocation (for every two electrons transferred, four hydrogen ions are translocated across the cytoplasmic membrane), and thus conserves the redox energy in a proton gradient. The protein is NADH-quinone oxidoreductase subunit I 2 of Koribacter versatilis (strain Ellin345).